Consider the following 62-residue polypeptide: Sperm protamine P1 (62 aa).

A disordered region spans residues methionine 1 to arginine 62.

This sequence belongs to the protamine P1 family. In terms of tissue distribution, testis.

The protein localises to the nucleus. It is found in the chromosome. Protamines substitute for histones in the chromatin of sperm during the haploid phase of spermatogenesis. They compact sperm DNA into a highly condensed, stable and inactive complex. The sequence is that of Sperm protamine P1 (PRM1) from Pseudantechinus bilarni (Sandstone dibbler).